The chain runs to 510 residues: Glycerol kinase (510 aa).

An ADP-binding site is contributed by Thr-14. ATP contacts are provided by Thr-14 and Thr-15. Thr-14 contacts sn-glycerol 3-phosphate. Position 18 (Arg-18) interacts with ADP. The sn-glycerol 3-phosphate site is built by Arg-84, Glu-85, Tyr-136, and Asp-256. The glycerol site is built by Arg-84, Glu-85, Tyr-136, Asp-256, and Gln-257. The ADP site is built by Thr-278, Gly-322, Gly-422, and Asn-426. 3 residues coordinate ATP: Thr-278, Gly-322, and Gly-422.

The protein belongs to the FGGY kinase family.

It carries out the reaction glycerol + ATP = sn-glycerol 3-phosphate + ADP + H(+). The protein operates within polyol metabolism; glycerol degradation via glycerol kinase pathway; sn-glycerol 3-phosphate from glycerol: step 1/1. In terms of biological role, key enzyme in the regulation of glycerol uptake and metabolism. Catalyzes the phosphorylation of glycerol to yield sn-glycerol 3-phosphate. It also catalyzes the phosphorylation of dihydroxyacetone (DHA). Involved, together with the DHA kinase DhaKLM, in the metabolism of DHA. In Haloferax volcanii (strain ATCC 29605 / DSM 3757 / JCM 8879 / NBRC 14742 / NCIMB 2012 / VKM B-1768 / DS2) (Halobacterium volcanii), this protein is Glycerol kinase.